A 133-amino-acid chain; its full sequence is Large-conductance mechanosensitive channel (133 aa).

The next 2 helical transmembrane spans lie at 19-39 (IDLA…TSLV) and 79-99 (IQSV…VKLI).

The protein belongs to the MscL family. Homopentamer.

The protein resides in the cell membrane. Its function is as follows. Channel that opens in response to stretch forces in the membrane lipid bilayer. May participate in the regulation of osmotic pressure changes within the cell. The chain is Large-conductance mechanosensitive channel from Clostridium tetani (strain Massachusetts / E88).